The sequence spans 1022 residues: Antigenic heat-stable 120 kDa protein (1022 aa).

Residues 1–33 (MSKNGNQDISEFDPLNREFTEAEKQQQMQQEQE) are disordered. The span at 14–24 (PLNREFTEAEK) shows a compositional bias: basic and acidic residues.

It is found in the cytoplasm. The chain is Antigenic heat-stable 120 kDa protein (sca4) from Rickettsia prowazekii (strain Madrid E).